The primary structure comprises 434 residues: Histidinol dehydrogenase (434 aa).

Residues Y130, Q188, and N211 each coordinate NAD(+). S237, Q259, and H262 together coordinate substrate. Zn(2+) is bound by residues Q259 and H262. Catalysis depends on proton acceptor residues E326 and H327. Residues H327, D360, E414, and H419 each contribute to the substrate site. D360 provides a ligand contact to Zn(2+). H419 is a binding site for Zn(2+).

It belongs to the histidinol dehydrogenase family. Homodimer. Requires Zn(2+) as cofactor.

It carries out the reaction L-histidinol + 2 NAD(+) + H2O = L-histidine + 2 NADH + 3 H(+). The protein operates within amino-acid biosynthesis; L-histidine biosynthesis; L-histidine from 5-phospho-alpha-D-ribose 1-diphosphate: step 9/9. Its function is as follows. Catalyzes the sequential NAD-dependent oxidations of L-histidinol to L-histidinaldehyde and then to L-histidine. The chain is Histidinol dehydrogenase from Shigella sonnei (strain Ss046).